The sequence spans 163 residues: Transcription elongation factor GreA (163 aa).

Positions 12 to 73 (YEKIQKEFEA…ELSDLLARAQ (62 aa)) form a coiled coil.

The protein belongs to the GreA/GreB family.

In terms of biological role, necessary for efficient RNA polymerase transcription elongation past template-encoded arresting sites. The arresting sites in DNA have the property of trapping a certain fraction of elongating RNA polymerases that pass through, resulting in locked ternary complexes. Cleavage of the nascent transcript by cleavage factors such as GreA or GreB allows the resumption of elongation from the new 3'terminus. GreA releases sequences of 2 to 3 nucleotides. The sequence is that of Transcription elongation factor GreA from Nitratiruptor sp. (strain SB155-2).